Here is a 91-residue protein sequence, read N- to C-terminus: Small ribosomal subunit protein uS19 (91 aa).

The protein belongs to the universal ribosomal protein uS19 family.

Functionally, protein S19 forms a complex with S13 that binds strongly to the 16S ribosomal RNA. The polypeptide is Small ribosomal subunit protein uS19 (Saccharophagus degradans (strain 2-40 / ATCC 43961 / DSM 17024)).